A 490-amino-acid chain; its full sequence is Probable cytosol aminopeptidase (490 aa).

2 residues coordinate Mn(2+): Lys-257 and Asp-262. Lys-269 is an active-site residue. Mn(2+)-binding residues include Asp-281, Asp-341, and Glu-343. The active site involves Arg-345.

This sequence belongs to the peptidase M17 family. Requires Mn(2+) as cofactor.

The protein resides in the cytoplasm. It catalyses the reaction Release of an N-terminal amino acid, Xaa-|-Yaa-, in which Xaa is preferably Leu, but may be other amino acids including Pro although not Arg or Lys, and Yaa may be Pro. Amino acid amides and methyl esters are also readily hydrolyzed, but rates on arylamides are exceedingly low.. The catalysed reaction is Release of an N-terminal amino acid, preferentially leucine, but not glutamic or aspartic acids.. Its function is as follows. Presumably involved in the processing and regular turnover of intracellular proteins. Catalyzes the removal of unsubstituted N-terminal amino acids from various peptides. In Prochlorococcus marinus (strain MIT 9215), this protein is Probable cytosol aminopeptidase.